Here is a 78-residue protein sequence, read N- to C-terminus: Acyl carrier protein (78 aa).

The 76-residue stretch at 2–77 (SDVLERVSKI…DAVKFISEKV (76 aa)) folds into the Carrier domain. Ser37 bears the O-(pantetheine 4'-phosphoryl)serine mark.

This sequence belongs to the acyl carrier protein (ACP) family. 4'-phosphopantetheine is transferred from CoA to a specific serine of apo-ACP by AcpS. This modification is essential for activity because fatty acids are bound in thioester linkage to the sulfhydryl of the prosthetic group.

It is found in the cytoplasm. It participates in lipid metabolism; fatty acid biosynthesis. In terms of biological role, carrier of the growing fatty acid chain in fatty acid biosynthesis. This chain is Acyl carrier protein, found in Maricaulis maris (strain MCS10) (Caulobacter maris).